The primary structure comprises 334 residues: MDRTLIQEILEVVEQAAIASAHLTGLGKKDEADAAAVEAMRKRMGQIQMQGRIVIGEGERDEAPMLYIGEEVGSGSGPGVDFAVDPCEGTNLCANNQRGSMAVLAASDRGGLFNAPDFYMKKLAAPPSAKGKVDIRKSATENINILSQCLGLAVSELTIVVMDRARHKGLISEIRATGARVQPISDGDVQAAIACGFAGTGTHCLMGIGAAPEGVISAAAMRALGGHFQGQLVYDPAIAQTSEWADYTKEGNIARLNEMGITDVDKIYEAEELASGKNVVFAGSGITDGLLFHGVKFEPDCTRTSSLVISTLDNTARFTNTVHIKDGAKSIALS.

D33, E57, D85, and E88 together coordinate Mn(2+). Residues 88 to 90, Y119, 164 to 166, and 186 to 188 each bind substrate; these read EGT, RAR, and DGD. Residue E213 participates in Mn(2+) binding.

Belongs to the FBPase class 2 family. As to quaternary structure, homotetramer. The cofactor is Mn(2+).

The enzyme catalyses beta-D-fructose 1,6-bisphosphate + H2O = beta-D-fructose 6-phosphate + phosphate. It carries out the reaction D-sedoheptulose 1,7-bisphosphate + H2O = D-sedoheptulose 7-phosphate + phosphate. Its pathway is carbohydrate biosynthesis; Calvin cycle. Catalyzes the hydrolysis of fructose 1,6-bisphosphate (Fru 1,6-P2) and sedoheptulose 1,7-bisphosphate (Sed 1,7-P2) to fructose 6-phosphate and sedoheptulose 7-phosphate, respectively. This is D-fructose 1,6-bisphosphatase class 2/sedoheptulose 1,7-bisphosphatase from Prochlorococcus marinus (strain MIT 9313).